The chain runs to 96 residues: UPF0729 protein AGAP000931 (96 aa).

A disordered region spans residues 65–96 (VPPGHDPVGPTVAADTATSDAVDDAASSKKTL). Low complexity predominate over residues 75 to 96 (TVAADTATSDAVDDAASSKKTL).

It belongs to the UPF0729 family.

In Anopheles gambiae (African malaria mosquito), this protein is UPF0729 protein AGAP000931.